Here is a 245-residue protein sequence, read N- to C-terminus: tRNA (guanine-N(1)-)-methyltransferase (245 aa).

S-adenosyl-L-methionine is bound by residues Gly-114 and 133–138; that span reads IGDYVL.

Belongs to the RNA methyltransferase TrmD family. In terms of assembly, homodimer.

Its subcellular location is the cytoplasm. The catalysed reaction is guanosine(37) in tRNA + S-adenosyl-L-methionine = N(1)-methylguanosine(37) in tRNA + S-adenosyl-L-homocysteine + H(+). Functionally, specifically methylates guanosine-37 in various tRNAs. In Prochlorococcus marinus (strain MIT 9312), this protein is tRNA (guanine-N(1)-)-methyltransferase.